The sequence spans 485 residues: Beta-amyrin 28-monooxygenase CYP716A378 (485 aa).

Residues 3–23 (LFFICGLVLFSTLSLISLFLL) traverse the membrane as a helical; Signal-anchor for type II membrane protein segment. Residues N25 and N386 are each glycosylated (N-linked (GlcNAc...) asparagine). C426 is a heme binding site.

It belongs to the cytochrome P450 family. Heme serves as cofactor. As to expression, mainly expressed in flowers and flower buds, to a lesser extent in young leaves and, at low levels, in old leaves, stems and roots.

It is found in the membrane. The enzyme catalyses beta-amyrin + 3 reduced [NADPH--hemoprotein reductase] + 3 O2 = oleanolate + 3 oxidized [NADPH--hemoprotein reductase] + 4 H2O + 4 H(+). Its pathway is secondary metabolite biosynthesis; terpenoid biosynthesis. Functionally, component of the oleanane-type triterpene saponins (e.g. saponarioside A and saponarioside B) biosynthetic pathway, leading to the production of natural products with detergent properties used as traditional sources of soap. An oxidoreductase that facilitates the oxidation of the methyl group to a carboxyl group at the C-28 position of beta-amyrin, resulting in the formation of oleanolate. This Saponaria officinalis (Common soapwort) protein is Beta-amyrin 28-monooxygenase CYP716A378.